We begin with the raw amino-acid sequence, 548 residues long: MGFEELLEQVGGFGPFQLRNVALLALPRVLLPLHFLLPIFLAAVPAHRCALPGAPANFSHQDVWLEAHLPREPDGTLSSCLRFAYPQALPNTTLGEERQSRGELEDEPATVPCSQGWEYDHSEFSSTIATESQWDLVCEQKGLNRAASTFFFAGVLVGAVAFGYLSDRFGRRRLLLVAYVSTLVLGLASAASVSYVMFAITRTLTGSALAGFTIIVMPLELEWLDVEHRTVAGVLSSTFWTGGVMLLALVGYLIRDWRWLLLAVTLPCAPGILSLWWVPESARWLLTQGHVKEAHRYLLHCARLNGRPVCEDSFSQEAVSKVAAGERVVRRPSYLDLFRTPRLRHISLCCVVVWFGVNFSYYGLSLDVSGLGLNVYQTQLLFGAVELPSKLLVYLSVRYAGRRLTQAGTLLGTALAFGTRLLVSSDMKSWSTVLAVMGKAFSEAAFTTAYLFTSELYPTVLRQTGMGLTALVGRLGGSLAPLAALLDGVWLSLPKLTYGGIALLAAGTALLLPETRQAQLPETIQDVERKSAPTSLQEEEMPMKQVQN.

The chain crosses the membrane as a helical span at residues 21-41 (VALLALPRVLLPLHFLLPIFL). Asparagine 91 carries an N-linked (GlcNAc...) asparagine glycan. Transmembrane regions (helical) follow at residues 146-166 (AASTFFFAGVLVGAVAFGYLS), 180-200 (VSTLVLGLASAASVSYVMFAI), 204-224 (LTGSALAGFTIIVMPLELEWL), 234-254 (VLSSTFWTGGVMLLALVGYLI), 259-279 (WLLLAVTLPCAPGILSLWWVP), 346-366 (ISLCCVVVWFGVNFSYYGLSL), 376-397 (YQTQLLFGAVELPSKLLVYLSV), 404-423 (LTQAGTLLGTALAFGTRLLV), 432-452 (TVLAVMGKAFSEAAFTTAYLF), 466-486 (MGLTALVGRLGGSLAPLAALL), and 493-513 (LPKLTYGGIALLAAGTALLLP). Catalysis depends on phenylalanine 441, which acts as the Important for glutamate counteranion efflux. The interval 522–548 (ETIQDVERKSAPTSLQEEEMPMKQVQN) is disordered.

It belongs to the major facilitator (TC 2.A.1) superfamily. Organic cation transporter (TC 2.A.1.19) family. Mainly expressed in liver and kidney. In kidney, expressed in proximal tubular cells. Also expressed in pancreas, small intestine, spinal cord, lung, brain and heart. Expressed in fetal liver.

It localises to the basolateral cell membrane. It is found in the apical cell membrane. The protein resides in the cell membrane. The protein localises to the cytoplasm. Its subcellular location is the cytosol. The catalysed reaction is orotate(out) + L-glutamate(in) = orotate(in) + L-glutamate(out). It carries out the reaction 3',5'-cyclic GMP(in) = 3',5'-cyclic GMP(out). It catalyses the reaction GMP(in) = GMP(out). The enzyme catalyses 2'-deoxyguanosine(in) = 2'-deoxyguanosine(out). The catalysed reaction is GDP(in) = GDP(out). It carries out the reaction guanosine(in) = guanosine(out). It catalyses the reaction GTP(in) = GTP(out). The enzyme catalyses 3',5'-cyclic AMP(in) = 3',5'-cyclic AMP(out). The catalysed reaction is creatinine(in) = creatinine(out). It carries out the reaction prostaglandin E2(out) = prostaglandin E2(in). It catalyses the reaction 2-oxoglutarate(in) = 2-oxoglutarate(out). The enzyme catalyses glutarate(in) = glutarate(out). The catalysed reaction is urate(out) = urate(in). It carries out the reaction estrone 3-sulfate(out) = estrone 3-sulfate(in). It catalyses the reaction prostaglandin F2alpha(out) = prostaglandin F2alpha(in). Functionally, functions as a Na(+)-independent bidirectional multispecific transporter. Contributes to the renal and hepatic elimination of endogenous organic compounds from the systemic circulation into the urine and bile, respectively. Capable of transporting a wide range of purine and pyrimidine nucleobases, nucleosides and nucleotides, with cGMP, 2'deoxyguanosine and GMP being the preferred substrates. Functions as a pH- and chloride-independent cGMP bidirectional facilitative transporter that can regulate both intracellular and extracellular levels of cGMP and may be involved in cGMP signaling pathways. Mediates orotate/glutamate bidirectional exchange and most likely display a physiological role in hepatic release of glutamate into the blood. Involved in renal secretion and possible reabsorption of creatinine. Able to uptake prostaglandin E2 (PGE2) and may contribute to PGE2 renal excretion. Also transports alpha-ketoglutarate and urate. Apart from the orotate/glutamate exchange, the counterions for the uptake of other SLC22A7/OAT2 substrates remain to be identified. Non functional transporter. Its function is as follows. Involved in the uptake of prostaglandin F2-alpha (PGF2-alpha). The chain is Solute carrier family 22 member 7 from Homo sapiens (Human).